Reading from the N-terminus, the 123-residue chain is Large ribosomal subunit protein uL22c (123 aa).

The protein belongs to the universal ribosomal protein uL22 family. Part of the 50S ribosomal subunit.

Its subcellular location is the plastid. It is found in the chloroplast. Functionally, this protein binds specifically to 23S rRNA. Its function is as follows. The globular domain of the protein is located near the polypeptide exit tunnel on the outside of the subunit, while an extended beta-hairpin is found that lines the wall of the exit tunnel in the center of the 70S ribosome. The chain is Large ribosomal subunit protein uL22c (rpl22) from Illicium oligandrum (Star anise).